A 73-amino-acid polypeptide reads, in one-letter code: MSNPCQKEACAIQDCLLSHQYDDAKCAKVIDQLYICCSKFYKDNGKDSRSPCCPLPSLLELKMKQRKLTPGDS.

The region spanning 2–44 is the CHCH domain; sequence SNPCQKEACAIQDCLLSHQYDDAKCAKVIDQLYICCSKFYKDN. 2 short sequence motifs (cx9C motif) span residues 5–15 and 26–36; these read CQKEACAIQDC and CAKVIDQLYIC. Cystine bridges form between C5–C36 and C15–C26.

This sequence belongs to the CMC4 family.

Its subcellular location is the mitochondrion intermembrane space. This is Cx9C motif-containing protein 4, mitochondrial (CMC4) from Saccharomyces cerevisiae (strain RM11-1a) (Baker's yeast).